Here is a 317-residue protein sequence, read N- to C-terminus: Taste receptor type 2 member 14 (317 aa).

At 1-7 (MGDVIKS) the chain is on the extracellular side. Residues 8–28 (IFTFVLIVEFIIGNLGNSFIA) traverse the membrane as a helical segment. The Cytoplasmic segment spans residues 29-55 (LVNCIDWVKGRKISSVDQILTALAISR). A helical transmembrane segment spans residues 56–76 (ISLVWLIFGSWCVSVFLPALF). The Extracellular segment spans residues 77-87 (ATEKMFRMLTN). Positions 86 and 89 each coordinate cholesterol. The chain crosses the membrane as a helical span at residues 88–108 (IWTVINHFSVWLATGLGTFYF). Topologically, residues 109-129 (LKIANFSNSIFLYLKWRVKKV) are cytoplasmic. The helical transmembrane segment at 130–150 (VLVLLLVTSVFLFLNIALINI) threads the bilayer. At 151–184 (HINASINGYRRNKTCSSDSSNFTRFSSLIVLTST) the chain is on the extracellular side. Residues asparagine 153, asparagine 162, and asparagine 171 are each glycosylated (N-linked (GlcNAc...) asparagine). Valine 180 is a binding site for cholesterol. Residues 185–205 (VFIFIPFTLSLAMFLLLIFSL) form a helical membrane-spanning segment. The Cytoplasmic portion of the chain corresponds to 206–232 (WKHRKKMQHXVKRSGDASTKAHRGVKS). Residues 233-253 (VITFFLLYAIFCLSFFISVWT) form a helical membrane-spanning segment. Topologically, residues 254 to 261 (SERLEENL) are extracellular. The helical transmembrane segment at 262 to 282 (IILSQVMGMAYPSCHSCVLIL) threads the bilayer. Cholesterol contacts are provided by serine 265 and methionine 268. Over 283-317 (GNKKLRQASLSVLLWLRYMFKDGEPSGHKEFRESS) the chain is Cytoplasmic.

Belongs to the G-protein coupled receptor T2R family. Core component of the TAS2R14-GNAI1 complex, consisting of TAS2R14, GNAI1, GNB1 and GNG2; within the complex interacts with GNAI1. Core component of the TAS2R14-GNAT3 complex, consisting of TAS2R14, GNAT3, GNB1 and GNG2; within the complex interacts with GNAT3. Core component of the TAS2R14-GNAS2 complex, consisting of TAS2R14, GNAS2, GNB1 and GNG2; within the complex interacts with GNAS2.

It localises to the membrane. The enzyme catalyses Ca(2+)(in) = Ca(2+)(out). It carries out the reaction 3',5'-cyclic AMP(in) = 3',5'-cyclic AMP(out). Basal activity is enhanced by binding to bitter tastants, such as flufenamic acid and aristolochic acid. Regulated by cholesterol in a concentration-dependent manner. Functionally, gustducin-linked G-protein coupled receptor that plays a role in the perception of bitterness. The activity of this receptor stimulates GNAT3, activating the gustducin G-protein pathway. Likely plays a role in sensing the chemical composition of the gastrointestinal content and other extra-oral tissues via the inhibitory G-protein pathways. The sequence is that of Taste receptor type 2 member 14 (TAS2R14) from Gorilla gorilla gorilla (Western lowland gorilla).